Consider the following 1335-residue polypeptide: Aldehyde oxidase 3 (1335 aa).

The region spanning D8 to I95 is the 2Fe-2S ferredoxin-type domain. Residues C47, C52, C55, and C77 each contribute to the [2Fe-2S] cluster site. Q116 is a Mo-molybdopterin binding site. C117, C120, C152, and C154 together coordinate [2Fe-2S] cluster. Residues F236 to K421 form the FAD-binding PCMH-type domain. L264 to L271 provides a ligand contact to FAD. S320 is modified (phosphoserine). S354, H358, D367, and L411 together coordinate FAD. Residues A802, L1043, and Q1199 each coordinate Mo-molybdopterin. The Proton acceptor; for azaheterocycle hydroxylase activity role is filled by E1266.

This sequence belongs to the xanthine dehydrogenase family. Homodimer. It depends on [2Fe-2S] cluster as a cofactor. FAD serves as cofactor. Requires Mo-molybdopterin as cofactor. Highly expressed in liver (at protein level). In liver, the expression is greater in males than females.

The protein localises to the cytoplasm. The catalysed reaction is an aldehyde + O2 + H2O = a carboxylate + H2O2 + H(+). Its activity is regulated as follows. Inhibited by potassium cyanide, menadione, benzamidine, raloxifene and norharmane. Oxidase with broad substrate specificity, oxidizing aromatic azaheterocycles, such as N1-methylnicotinamide and phthalazine, as well as aldehydes, such as benzaldehyde, retinal and pyridoxal. Plays a key role in the metabolism of xenobiotics and drugs containing aromatic azaheterocyclic substituents. Is probably involved in the regulation of reactive oxygen species homeostasis. May be a prominent source of superoxide generation via the one-electron reduction of molecular oxygen. May also catalyze nitric oxide (NO) production via the reduction of nitrite to NO with NADH or aldehyde as electron donor. This is Aldehyde oxidase 3 (Aox3) from Mus musculus (Mouse).